The following is a 150-amino-acid chain: MQVILLDKIGNLGGLGDTVNVKSGYARNFLIPQGKAVMATKGNVEMFEARRAELEAKVAEQLAAAEARAEKVNALEAVVIASKAGDEGKLFGSIGTRDIAEAITAAGVEVAKSEVRLPEGALRTTGEFEISVQLHSEVFATAKVQVVAAE.

This sequence belongs to the bacterial ribosomal protein bL9 family.

Binds to the 23S rRNA. The chain is Large ribosomal subunit protein bL9 from Vibrio parahaemolyticus serotype O3:K6 (strain RIMD 2210633).